Reading from the N-terminus, the 455-residue chain is tRNA modification GTPase MnmE (455 aa).

(6S)-5-formyl-5,6,7,8-tetrahydrofolate is bound by residues arginine 23, glutamate 85, and arginine 124. One can recognise a TrmE-type G domain in the interval glycine 220–isoleucine 375. Asparagine 230 lines the K(+) pocket. GTP-binding positions include asparagine 230–serine 235, threonine 249–threonine 255, and aspartate 274–glycine 277. Mg(2+) is bound at residue serine 234. K(+) is bound by residues threonine 249, valine 251, and threonine 254. Mg(2+) is bound at residue threonine 255. Lysine 455 provides a ligand contact to (6S)-5-formyl-5,6,7,8-tetrahydrofolate.

The protein belongs to the TRAFAC class TrmE-Era-EngA-EngB-Septin-like GTPase superfamily. TrmE GTPase family. As to quaternary structure, homodimer. Heterotetramer of two MnmE and two MnmG subunits. K(+) is required as a cofactor.

It is found in the cytoplasm. Functionally, exhibits a very high intrinsic GTPase hydrolysis rate. Involved in the addition of a carboxymethylaminomethyl (cmnm) group at the wobble position (U34) of certain tRNAs, forming tRNA-cmnm(5)s(2)U34. This chain is tRNA modification GTPase MnmE, found in Geotalea uraniireducens (strain Rf4) (Geobacter uraniireducens).